The following is a 573-amino-acid chain: ESX-1 secretion system protein EccA1 (573 aa).

334–341 (GPPGTGKT) lines the ATP pocket.

This sequence belongs to the CbxX/CfxQ family. Part of the ESX-1 / type VII secretion system (T7SS), which is composed of cytosolic and membrane components.

It is found in the cytoplasm. Functionally, part of the ESX-1 specialized secretion system, which delivers several virulence factors to host cells during infection, including the key virulence factors EsxA (ESAT-6) and EsxB (CFP-10). EccA1 exhibits ATPase activity and may provide energy for the export of ESX-1 substrates. This chain is ESX-1 secretion system protein EccA1, found in Mycobacterium tuberculosis (strain CDC 1551 / Oshkosh).